Consider the following 456-residue polypeptide: UDP-N-acetylmuramoylalanine--D-glutamate ligase (456 aa).

119–125 (GTNGKTT) contacts ATP.

Belongs to the MurCDEF family.

The protein resides in the cytoplasm. The enzyme catalyses UDP-N-acetyl-alpha-D-muramoyl-L-alanine + D-glutamate + ATP = UDP-N-acetyl-alpha-D-muramoyl-L-alanyl-D-glutamate + ADP + phosphate + H(+). The protein operates within cell wall biogenesis; peptidoglycan biosynthesis. Cell wall formation. Catalyzes the addition of glutamate to the nucleotide precursor UDP-N-acetylmuramoyl-L-alanine (UMA). The chain is UDP-N-acetylmuramoylalanine--D-glutamate ligase (murD) from Enterococcus faecalis (strain ATCC 700802 / V583).